The chain runs to 272 residues: Protein UL24 homolog (272 aa).

This sequence belongs to the herpesviridae UL24 family.

Its subcellular location is the virion. The protein localises to the host cytoplasm. The protein resides in the host nucleus. It is found in the host nucleolus. It localises to the host Golgi apparatus. In terms of biological role, may participate in nuclear egress of viral particles. Plays a role in the dispersal of several host nucleolar proteins including NCL/nucleolin and NPM1. Since deletion of host NCL/nucleolin negatively impact on nuclear egress, UL24 supposedly acts on this process through its effect on host nucleoli. This chain is Protein UL24 homolog, found in Equine herpesvirus 1 (strain V592) (EHV-1).